The following is a 103-amino-acid chain: Small ribosomal subunit protein uS10 (103 aa).

The protein belongs to the universal ribosomal protein uS10 family. Part of the 30S ribosomal subunit.

Involved in the binding of tRNA to the ribosomes. The polypeptide is Small ribosomal subunit protein uS10 (Wigglesworthia glossinidia brevipalpis).